The following is a 329-amino-acid chain: Serpentine receptor class alpha-4 (329 aa).

6 consecutive transmembrane segments (helical) span residues 25–45 (IIVLIPVFITFIFTYYAIKVV), 103–123 (LYLEVFVSGVAGMVYGQTGLL), 144–164 (GLAISVSVLCLSFITSRLIIW), 188–208 (YFQSICTLLALFNLVTSILIW), 238–258 (ICFLTFVQFIFFLVYSLGFFI), and 273–293 (LVAVWLYTPPYIAASFPILIF).

This sequence belongs to the nematode receptor-like protein sra family.

It is found in the membrane. The polypeptide is Serpentine receptor class alpha-4 (sra-4) (Caenorhabditis elegans).